We begin with the raw amino-acid sequence, 708 residues long: Nucleolar protein 11-like (708 aa).

It localises to the nucleus. It is found in the nucleolus. In terms of biological role, ribosome biogenesis factor. May be required for both optimal rDNA transcription and pre-rRNA processing. This Danio rerio (Zebrafish) protein is Nucleolar protein 11-like (nol11).